Consider the following 569-residue polypeptide: Proline--tRNA ligase (569 aa).

This sequence belongs to the class-II aminoacyl-tRNA synthetase family. ProS type 1 subfamily. Homodimer.

The protein localises to the cytoplasm. The enzyme catalyses tRNA(Pro) + L-proline + ATP = L-prolyl-tRNA(Pro) + AMP + diphosphate. Catalyzes the attachment of proline to tRNA(Pro) in a two-step reaction: proline is first activated by ATP to form Pro-AMP and then transferred to the acceptor end of tRNA(Pro). As ProRS can inadvertently accommodate and process non-cognate amino acids such as alanine and cysteine, to avoid such errors it has two additional distinct editing activities against alanine. One activity is designated as 'pretransfer' editing and involves the tRNA(Pro)-independent hydrolysis of activated Ala-AMP. The other activity is designated 'posttransfer' editing and involves deacylation of mischarged Ala-tRNA(Pro). The misacylated Cys-tRNA(Pro) is not edited by ProRS. In Dehalococcoides mccartyi (strain ATCC BAA-2266 / KCTC 15142 / 195) (Dehalococcoides ethenogenes (strain 195)), this protein is Proline--tRNA ligase.